The chain runs to 278 residues: Non-haem bromoperoxidase BPO-A2 (278 aa).

Residues 26–264 (PVVLIHGFPL…GAPHGLLWTH (239 aa)) form the AB hydrolase-1 domain. Active-site residues include serine 99, aspartate 229, and histidine 258.

The protein belongs to the AB hydrolase superfamily. Bacterial non-heme haloperoxidase / perhydrolase family. As to quaternary structure, homotrimer.

In terms of biological role, may be a chlorinating enzyme involved in 7-chlorotetracycline biosynthesis. This Kitasatospora aureofaciens (Streptomyces aureofaciens) protein is Non-haem bromoperoxidase BPO-A2 (bpoA2).